A 98-amino-acid chain; its full sequence is NADH-ubiquinone oxidoreductase chain 4L (98 aa).

Helical transmembrane passes span 1–21 (MSLVYMNTALAFSISMLGLLM), 30–50 (LLCLEGMMLSLFTLGAITILT), and 61–81 (IVLLVFAACEAAVGLSLLVMV).

It belongs to the complex I subunit 4L family. In terms of assembly, core subunit of respiratory chain NADH dehydrogenase (Complex I) which is composed of 45 different subunits.

Its subcellular location is the mitochondrion inner membrane. The catalysed reaction is a ubiquinone + NADH + 5 H(+)(in) = a ubiquinol + NAD(+) + 4 H(+)(out). Functionally, core subunit of the mitochondrial membrane respiratory chain NADH dehydrogenase (Complex I) which catalyzes electron transfer from NADH through the respiratory chain, using ubiquinone as an electron acceptor. Part of the enzyme membrane arm which is embedded in the lipid bilayer and involved in proton translocation. In Crocidura russula (Greater white-toothed shrew), this protein is NADH-ubiquinone oxidoreductase chain 4L (MT-ND4L).